Reading from the N-terminus, the 382-residue chain is Cytochrome b (382 aa).

A run of 4 helical transmembrane segments spans residues 33 to 53 (FGSLLGLCLASQIVTGLFLAM), 77 to 98 (WLVRNMHANGASFFFICLYTHI), 113 to 133 (WTVGVILLLLTMMTAFVGYVL), and 178 to 198 (FFAFHFLLPFVIAAFTAIHLL). Positions 83 and 97 each coordinate heme b. Residues His182 and His196 each coordinate heme b. His201 provides a ligand contact to a ubiquinone. 4 consecutive transmembrane segments (helical) span residues 226-246 (LKDLLGFTILILTLTSVALLT), 288-308 (LGGVLALLASVLILATVPFLQ), 320-340 (LTQLVFWTLIANIAILTWIGG), and 347-367 (FVSIGQLASLAYFSIFLIIIP).

The protein belongs to the cytochrome b family. In terms of assembly, the cytochrome bc1 complex contains 3 respiratory subunits (MT-CYB, CYC1 and UQCRFS1), 2 core proteins (UQCRC1 and UQCRC2) and probably 6 low-molecular weight proteins. Heme b is required as a cofactor.

It localises to the mitochondrion inner membrane. Component of the ubiquinol-cytochrome c reductase complex (complex III or cytochrome b-c1 complex) that is part of the mitochondrial respiratory chain. The b-c1 complex mediates electron transfer from ubiquinol to cytochrome c. Contributes to the generation of a proton gradient across the mitochondrial membrane that is then used for ATP synthesis. The protein is Cytochrome b (mt-cyb) of Sigmops gracilis (Slender fangjaw).